The chain runs to 276 residues: MGTVTTSDGTNIFYKDWGPRDGLPVVFHHGWPLSADDWDNQMLFFLSHGYRVIAHDRRGHGRSDQPSTGHDMDTYAADVAALTEALDLRGAVHIGHSTGGGEVARYVARAEPGRVAKAVLVSAVPPVMVKSDTNPDGLPLEVFDEFRAALAANRAQFYIDVPSGPFYGFNREGATVSQGLIDHWWLQGMMGAANAHYECIAAFSETDFTDDLKRIDVPVLVAHGTDDQVVPYADAAPKSAELLANATLKSYEGLPHGMLSTHPEVLNPDLLAFVKS.

The AB hydrolase-1 domain occupies 24 to 254 (PVVFHHGWPL…NATLKSYEGL (231 aa)). Active-site residues include Ser-97, Asp-227, and His-256.

The protein belongs to the AB hydrolase superfamily. Bacterial non-heme haloperoxidase / perhydrolase family. As to quaternary structure, homodimer.

This chain is Non-heme chloroperoxidase (cpo), found in Streptomyces lividans.